We begin with the raw amino-acid sequence, 546 residues long: Chaperonin GroEL (546 aa).

Residues 30-33 (TLGP), K51, 87-91 (DGTTT), G415, and D497 contribute to the ATP site. The tract at residues 527–546 (PKKDSPAPAMPGGGMGGMDF) is disordered. Positions 537-546 (PGGGMGGMDF) are enriched in gly residues.

Belongs to the chaperonin (HSP60) family. As to quaternary structure, forms a cylinder of 14 subunits composed of two heptameric rings stacked back-to-back. Interacts with the co-chaperonin GroES.

It is found in the cytoplasm. The enzyme catalyses ATP + H2O + a folded polypeptide = ADP + phosphate + an unfolded polypeptide.. Functionally, together with its co-chaperonin GroES, plays an essential role in assisting protein folding. The GroEL-GroES system forms a nano-cage that allows encapsulation of the non-native substrate proteins and provides a physical environment optimized to promote and accelerate protein folding. This is Chaperonin GroEL from Methylobacterium radiotolerans (strain ATCC 27329 / DSM 1819 / JCM 2831 / NBRC 15690 / NCIMB 10815 / 0-1).